The sequence spans 138 residues: Large ribosomal subunit protein uL16 (138 aa).

Basic residues predominate over residues 1-14 (MLQPKRTKYRRTHR). A disordered region spans residues 1–24 (MLQPKRTKYRRTHRLQHDKGEAHT). Basic and acidic residues predominate over residues 15 to 24 (LQHDKGEAHT).

Belongs to the universal ribosomal protein uL16 family. As to quaternary structure, part of the 50S ribosomal subunit.

Its function is as follows. Binds 23S rRNA and is also seen to make contacts with the A and possibly P site tRNAs. This chain is Large ribosomal subunit protein uL16, found in Mycoplasma mobile (strain ATCC 43663 / 163K / NCTC 11711) (Mesomycoplasma mobile).